The primary structure comprises 219 residues: MRIILLGPPGAGKGTQAQLICKRYDIPQISTGDMLRAAIREGTELGLKAKSVMESGGLVSDELIIGLVKERIAQPDCENGCIFDGFPRTIPQAEALENAGITIDHVIEIAVPDEEIVKRLSGRRQHPASGRVYHIEYNPPKVEGKDDVTGEELVQRPDDLEETIRKRLGSYHSETEQLVGFYQGRAASGENAPTYNKLDGLRTIDVVQKDLFAILDETK.

10–15 (GAGKGT) is an ATP binding site. Residues 30–59 (STGDMLRAAIREGTELGLKAKSVMESGGLV) are NMP. AMP is bound by residues threonine 31, arginine 36, 57-59 (GLV), 85-88 (GFPR), and glutamine 92. The tract at residues 122-159 (GRRQHPASGRVYHIEYNPPKVEGKDDVTGEELVQRPDD) is LID. ATP contacts are provided by residues arginine 123 and 132–133 (VY). AMP contacts are provided by arginine 156 and arginine 167. Arginine 202 contacts ATP.

The protein belongs to the adenylate kinase family. In terms of assembly, monomer.

Its subcellular location is the cytoplasm. The enzyme catalyses AMP + ATP = 2 ADP. It functions in the pathway purine metabolism; AMP biosynthesis via salvage pathway; AMP from ADP: step 1/1. Its function is as follows. Catalyzes the reversible transfer of the terminal phosphate group between ATP and AMP. Plays an important role in cellular energy homeostasis and in adenine nucleotide metabolism. The protein is Adenylate kinase of Acinetobacter baylyi (strain ATCC 33305 / BD413 / ADP1).